The sequence spans 85 residues: MANIKSAIKRAKLSEERRSHNASIKSDMRTAVKTVETLVTNNDLENAKEAFKTASKKLDKAARKGLIHQNAAARQKSRLAKQVNA.

A disordered region spans residues 1 to 24; sequence MANIKSAIKRAKLSEERRSHNASI.

The protein belongs to the bacterial ribosomal protein bS20 family.

Binds directly to 16S ribosomal RNA. This chain is Small ribosomal subunit protein bS20, found in Bacillus mycoides (strain KBAB4) (Bacillus weihenstephanensis).